We begin with the raw amino-acid sequence, 407 residues long: E3 ubiquitin-protein ligase TRIM13 (407 aa).

Residues 10–58 (CPICCSLFDDPRVLPCSHNFCKKCLEGILEGNVRNSLWRSSPFKCPTCR) form an RING-type zinc finger. The B box-type zinc-finger motif lies at 89–131 (PKMPVCKGHLGQPLNIFCLTDMQLICGICATRGEHTKHVFCSI). The Zn(2+) site is built by C94, H97, C117, and H123. Residues 172 to 200 (LQLLTKDSDKVKEFFEKLQYTLDQKKNEI) are a coiled coil. A helical membrane pass occupies residues 316–336 (PLFVVVILLGLLIFFSPTMFL).

Interacts (via C-terminal domain) with VCP. Interacts with AKT1; the interaction ubiquitinates AKT1 and leads to its proteasomal degradation. Interacts with MDM2; the interaction ubiquitinates AKT1 and leads to its proteasomal degradation. Interacts with p62/SQSTM1. Interacts with TRAF6. Interacts with IKBKG/NEMO. In terms of processing, auto-ubiquitinated; requires the RING-type zinc finger. Auto-polyubiquitination leads to proteasomal degradation.

It is found in the endoplasmic reticulum membrane. It carries out the reaction S-ubiquitinyl-[E2 ubiquitin-conjugating enzyme]-L-cysteine + [acceptor protein]-L-lysine = [E2 ubiquitin-conjugating enzyme]-L-cysteine + N(6)-ubiquitinyl-[acceptor protein]-L-lysine.. Its pathway is protein modification; protein ubiquitination. Its function is as follows. Endoplasmic reticulum (ER) membrane anchored E3 ligase involved in the retrotranslocation and turnover of membrane and secretory proteins from the ER through a set of processes named ER-associated degradation (ERAD). This process acts on misfolded proteins as well as in the regulated degradation of correctly folded proteins. Enhances ionizing radiation-induced p53/TP53 stability and apoptosis via ubiquitinating MDM2 and AKT1 and decreasing AKT1 kinase activity through MDM2 and AKT1 proteasomal degradation. Regulates ER stress-induced autophagy, and may act as a tumor suppressor. Also plays a role in innate immune response by stimulating NF-kappa-B activity in the TLR2 signaling pathway. Ubiquitinates TRAF6 via the 'Lys-29'-linked polyubiquitination chain resulting in NF-kappa-B activation. Participates as well in T-cell receptor-mediated NF-kappa-B activation. In the presence of TNF, modulates the IKK complex by regulating IKBKG/NEMO ubiquitination leading to the repression of NF-kappa-B. The chain is E3 ubiquitin-protein ligase TRIM13 (TRIM13) from Bos taurus (Bovine).